Reading from the N-terminus, the 239-residue chain is UDP-2,3-diacylglucosamine hydrolase (239 aa).

The Mn(2+) site is built by Asp-8, His-10, Asp-41, Asn-78, and His-113. 78 to 79 (NR) provides a ligand contact to substrate. 5 residues coordinate substrate: Asp-121, Ser-159, Asn-163, Lys-166, and His-194. Residues His-194 and His-196 each contribute to the Mn(2+) site.

The protein belongs to the LpxH family. It depends on Mn(2+) as a cofactor.

It is found in the cell inner membrane. It catalyses the reaction UDP-2-N,3-O-bis[(3R)-3-hydroxytetradecanoyl]-alpha-D-glucosamine + H2O = 2-N,3-O-bis[(3R)-3-hydroxytetradecanoyl]-alpha-D-glucosaminyl 1-phosphate + UMP + 2 H(+). It functions in the pathway glycolipid biosynthesis; lipid IV(A) biosynthesis; lipid IV(A) from (3R)-3-hydroxytetradecanoyl-[acyl-carrier-protein] and UDP-N-acetyl-alpha-D-glucosamine: step 4/6. In terms of biological role, hydrolyzes the pyrophosphate bond of UDP-2,3-diacylglucosamine to yield 2,3-diacylglucosamine 1-phosphate (lipid X) and UMP by catalyzing the attack of water at the alpha-P atom. Involved in the biosynthesis of lipid A, a phosphorylated glycolipid that anchors the lipopolysaccharide to the outer membrane of the cell. The sequence is that of UDP-2,3-diacylglucosamine hydrolase from Shewanella sp. (strain MR-7).